Here is a 330-residue protein sequence, read N- to C-terminus: Diacylglycerol kinase (330 aa).

The region spanning 1–132 is the DAGKc domain; that stretch reads MRKCARIIYN…VDIGKMNNRY (132 aa). ATP is bound by residues 10–14, T41, 67–73, and T94; these read NPTSG and GDGTLNE. Residues K213, D216, and H218 each contribute to the Mg(2+) site. E273 serves as the catalytic Proton acceptor.

It belongs to the diacylglycerol/lipid kinase family. As to quaternary structure, homodimer. It depends on Mg(2+) as a cofactor.

It carries out the reaction a 1,2-diacyl-sn-glycerol + ATP = a 1,2-diacyl-sn-glycero-3-phosphate + ADP + H(+). Its function is as follows. Catalyzes the phosphorylation of diacylglycerol (DAG) into phosphatidic acid. Is a key enzyme involved in the production of lipoteichoic acid by reintroducing DAG formed from the breakdown of membrane phospholipids into the phosphatidylglycerol biosynthetic pathway. This chain is Diacylglycerol kinase (dagK), found in Staphylococcus haemolyticus (strain JCSC1435).